The following is a 643-amino-acid chain: U3 small nucleolar RNA-associated protein 5 (643 aa).

6 WD repeats span residues 14-54, 55-98, 186-225, 227-266, 340-389, and 471-511; these read GQYL…LYLE, DSKL…VTYK, GHVS…TKCV, VAES…SSTK, SADR…LEQE, and RLKP…IHGG. Residues 565–643 form a disordered region; sequence HSSEPVVEED…EAGYSDVEME (79 aa). Residues 570-611 are compositionally biased toward acidic residues; sequence VVEEDEDDVEYNEELDDAGLIEDGEESYGSEEEEEGDSDNEE. Positions 612–626 are enriched in basic and acidic residues; the sequence is EQKHTSSKQDGRLET. The segment covering 627–643 has biased composition (acidic residues); it reads EQSDGEEEAGYSDVEME.

Belongs to the UTP5 family. In terms of assembly, interacts with snoRNA U3. Interacts with MPP10. Component of the ribosomal small subunit (SSU) processome composed of at least 40 protein subunits and snoRNA U3. In the absence of snoRNA3, forms a complex with other t-UTPs. This complex can associate with pre-18S ribosomal RNAs.

The protein resides in the nucleus. It localises to the nucleolus. Functionally, involved in nucleolar processing of pre-18S ribosomal RNA. Required for optimal pre-ribosomal RNA transcription by RNA polymerase I together with a subset of U3 proteins required for transcription (t-UTPs). This is U3 small nucleolar RNA-associated protein 5 (UTP5) from Saccharomyces cerevisiae (strain ATCC 204508 / S288c) (Baker's yeast).